Consider the following 350-residue polypeptide: Phosphoribosylformylglycinamidine cyclo-ligase (350 aa).

Belongs to the AIR synthase family.

The protein resides in the cytoplasm. It catalyses the reaction 2-formamido-N(1)-(5-O-phospho-beta-D-ribosyl)acetamidine + ATP = 5-amino-1-(5-phospho-beta-D-ribosyl)imidazole + ADP + phosphate + H(+). It participates in purine metabolism; IMP biosynthesis via de novo pathway; 5-amino-1-(5-phospho-D-ribosyl)imidazole from N(2)-formyl-N(1)-(5-phospho-D-ribosyl)glycinamide: step 2/2. The protein is Phosphoribosylformylglycinamidine cyclo-ligase of Nitratidesulfovibrio vulgaris (strain DSM 19637 / Miyazaki F) (Desulfovibrio vulgaris).